A 142-amino-acid polypeptide reads, in one-letter code: Transcriptional regulator MraZ (142 aa).

2 consecutive SpoVT-AbrB domains span residues 5 to 47 and 76 to 119; these read EYPY…PLAS and ANKA…NPGR.

Belongs to the MraZ family. Forms oligomers.

Its subcellular location is the cytoplasm. It is found in the nucleoid. The polypeptide is Transcriptional regulator MraZ (Deinococcus deserti (strain DSM 17065 / CIP 109153 / LMG 22923 / VCD115)).